The following is a 224-amino-acid chain: Synaptogyrin-2 (224 aa).

Methionine 1 carries the post-translational modification N-acetylmethionine. Serine 3 carries the phosphoserine modification. An MARVEL domain is found at 20 to 171; that stretch reads YVSQPQVVTR…LASLAYQRYK (152 aa). A run of 4 helical transmembrane segments spans residues 30 to 50, 73 to 93, 105 to 125, and 147 to 167; these read LVSM…GYIN, AIGV…AFFS, VIGD…GFCF, and AAIT…SLAY.

Belongs to the synaptogyrin family. In terms of processing, may be tyrosine phosphorylated by Src. Ubiquitously expressed with lower expression in brain (at protein level).

It localises to the cytoplasmic vesicle membrane. Its subcellular location is the cytoplasmic vesicle. The protein localises to the secretory vesicle. It is found in the synaptic vesicle membrane. In terms of biological role, may play a role in regulated exocytosis. In neuronal cells, modulates the localization of synaptophysin/SYP into synaptic-like microvesicles and may therefore play a role in the formation and/or the maturation of this vesicles. May also play a role in GLUT4 storage and transport to the plasma membrane. The polypeptide is Synaptogyrin-2 (Rattus norvegicus (Rat)).